A 689-amino-acid polypeptide reads, in one-letter code: Glycine--tRNA ligase beta subunit (689 aa).

This sequence belongs to the class-II aminoacyl-tRNA synthetase family. In terms of assembly, tetramer of two alpha and two beta subunits.

The protein resides in the cytoplasm. The catalysed reaction is tRNA(Gly) + glycine + ATP = glycyl-tRNA(Gly) + AMP + diphosphate. The chain is Glycine--tRNA ligase beta subunit from Salmonella paratyphi A (strain ATCC 9150 / SARB42).